Here is a 212-residue protein sequence, read N- to C-terminus: Peroxisomal membrane protein 4 (212 aa).

2 consecutive transmembrane segments (helical) span residues 97-117 and 151-171; these read GGTH…LLFG and LKWD…LWLF. N-linked (GlcNAc...) asparagine glycosylation is present at asparagine 206.

Belongs to the peroxisomal membrane protein PXMP2/4 family. Interacts with PEX19. In terms of tissue distribution, liver.

The protein localises to the peroxisome membrane. In Rattus norvegicus (Rat), this protein is Peroxisomal membrane protein 4 (Pxmp4).